We begin with the raw amino-acid sequence, 421 residues long: ATP-dependent RNA helicase RhlB (421 aa).

A Q motif motif is present at residues 9-37; sequence QKFSDFALHAKVIEALENKGFHYCTPIQA. The Helicase ATP-binding domain maps to 40–219; that stretch reads LPLTLAGRDV…FEQMNNAEYV (180 aa). 53-60 is a binding site for ATP; that stretch reads AQTGTGKT. Positions 165–168 match the DEAD box motif; it reads DEAD. The Helicase C-terminal domain maps to 245–390; the sequence is RLLQTLIEEE…QSKYNPDALL (146 aa). The tract at residues 386-421 is disordered; the sequence is PDALLSELPPPKRLTRARSGNGPRRTGAPRNRRRPG. The segment covering 405-414 has biased composition (low complexity); that stretch reads GNGPRRTGAP.

This sequence belongs to the DEAD box helicase family. RhlB subfamily. Component of the RNA degradosome, which is a multiprotein complex involved in RNA processing and mRNA degradation.

It is found in the cytoplasm. It carries out the reaction ATP + H2O = ADP + phosphate + H(+). Functionally, DEAD-box RNA helicase involved in RNA degradation. Has RNA-dependent ATPase activity and unwinds double-stranded RNA. This Enterobacter sp. (strain 638) protein is ATP-dependent RNA helicase RhlB.